The sequence spans 101 residues: UPF0473 protein SUB1774 (101 aa).

It belongs to the UPF0473 family.

This is UPF0473 protein SUB1774 from Streptococcus uberis (strain ATCC BAA-854 / 0140J).